Consider the following 337-residue polypeptide: Ribosomal RNA small subunit methyltransferase H (337 aa).

S-adenosyl-L-methionine-binding positions include 35-37, Asp-54, Phe-81, Asp-102, and Gln-109; that span reads GGY. The disordered stretch occupies residues 286-316; the sequence is PVGPSEAEAAANPRARSAKLRAGERTDAPAP. The span at 289 to 300 shows a compositional bias: low complexity; that stretch reads PSEAEAAANPRA.

It belongs to the methyltransferase superfamily. RsmH family.

The protein resides in the cytoplasm. It carries out the reaction cytidine(1402) in 16S rRNA + S-adenosyl-L-methionine = N(4)-methylcytidine(1402) in 16S rRNA + S-adenosyl-L-homocysteine + H(+). Functionally, specifically methylates the N4 position of cytidine in position 1402 (C1402) of 16S rRNA. In Methylobacterium sp. (strain 4-46), this protein is Ribosomal RNA small subunit methyltransferase H.